A 252-amino-acid chain; its full sequence is Beta-carotene isomerase D27, chloroplastic (252 aa).

Residues 1 to 43 (MDSKMIAHNMSLTPTLAQWKKLRLKPKHTFVVGVLARPTDDIS) constitute a chloroplast transit peptide.

The cofactor is Fe cation. As to expression, highly expressed in roots. Expressed at low levels in leaves and stems.

It is found in the plastid. The protein resides in the chloroplast. The catalysed reaction is all-trans-beta-carotene = 9-cis-beta-carotene. Functionally, involved in strigolactones biosynthesis by catalyzing the isomerization of the C9-C10 double bond in all-trans-beta-carotene leading to 9-cis-beta-carotene and providing the substrate for CCD7. Strigolactones are hormones that inhibit tillering and shoot branching through the MAX-dependent pathway, contribute to the regulation of shoot architectural response to phosphate-limiting conditions and function as rhizosphere signals that stimulate hyphal branching of arbuscular mycorrhizal fungi and trigger seed germination of root parasitic weeds. This Medicago truncatula (Barrel medic) protein is Beta-carotene isomerase D27, chloroplastic.